The sequence spans 142 residues: Gonadotropin subunit beta-2 (142 aa).

The first 24 residues, 1 to 24 (MLGLHVGTLMISLFLCILLEPVEG), serve as a signal peptide directing secretion. Intrachain disulfides connect Cys-30/Cys-78, Cys-44/Cys-93, Cys-47/Cys-131, Cys-55/Cys-109, Cys-59/Cys-111, and Cys-114/Cys-121. Asn-34 carries N-linked (GlcNAc...) asparagine glycosylation.

The protein belongs to the glycoprotein hormones subunit beta family. In terms of assembly, heterodimer of an alpha and a beta chain.

The protein localises to the secreted. Involved in gametogenesis and steroidogenesis. This is Gonadotropin subunit beta-2 (cgbb) from Coregonus autumnalis (Arctic cisco).